The chain runs to 350 residues: Serine-threonine kinase receptor-associated protein (350 aa).

WD repeat units follow at residues 12–56 (GHTR…GTFL), 57–96 (GHKG…ELMT), 98–137 (AHKH…AEPK), 141–179 (GHTS…EVKS), 180–212 (LNFN…HSAV), 221–262 (EAPA…ESYK), and 263–302 (GHFG…TYGL). Phosphoserine is present on residues S312, S335, and S338. The segment at 326–350 (AEEELEEIASENSDSIYSSTPEVKA) is disordered. A compositionally biased stretch (polar residues) spans 337–350 (NSDSIYSSTPEVKA). Position 342 is a phosphotyrosine (Y342).

This sequence belongs to the WD repeat STRAP family. In terms of assembly, part of the core SMN complex that contains SMN1, GEMIN2/SIP1, DDX20/GEMIN3, GEMIN4, GEMIN5, GEMIN6, GEMIN7, GEMIN8 and STRAP/UNRIP. Part of the SMN-Sm complex that contains SMN1, GEMIN2/SIP1, DDX20/GEMIN3, GEMIN4, GEMIN5, GEMIN6, GEMIN7, GEMIN8, STRAP/UNRIP and the Sm proteins SNRPB, SNRPD1, SNRPD2, SNRPD3, SNRPE, SNRPF and SNRPG. Interacts directly with GEMIN6 and GEMIN7. Associates with the SMN complex in the cytoplasm but not in the nucleus. Also interacts with CSDE1/UNR and MAWBP. Interacts with PDPK1. Interacts with TRIM48.

It is found in the cytoplasm. It localises to the nucleus. The SMN complex catalyzes the assembly of small nuclear ribonucleoproteins (snRNPs), the building blocks of the spliceosome, and thereby plays an important role in the splicing of cellular pre-mRNAs. Most spliceosomal snRNPs contain a common set of Sm proteins SNRPB, SNRPD1, SNRPD2, SNRPD3, SNRPE, SNRPF and SNRPG that assemble in a heptameric protein ring on the Sm site of the small nuclear RNA to form the core snRNP (Sm core). In the cytosol, the Sm proteins SNRPD1, SNRPD2, SNRPE, SNRPF and SNRPG are trapped in an inactive 6S pICln-Sm complex by the chaperone CLNS1A that controls the assembly of the core snRNP. To assemble core snRNPs, the SMN complex accepts the trapped 5Sm proteins from CLNS1A forming an intermediate. Binding of snRNA inside 5Sm triggers eviction of the SMN complex, thereby allowing binding of SNRPD3 and SNRPB to complete assembly of the core snRNP. STRAP plays a role in the cellular distribution of the SMN complex. Negatively regulates TGF-beta signaling but positively regulates the PDPK1 kinase activity by enhancing its autophosphorylation and by significantly reducing the association of PDPK1 with 14-3-3 protein. The protein is Serine-threonine kinase receptor-associated protein (Strap) of Rattus norvegicus (Rat).